The primary structure comprises 497 residues: WASH complex subunit homolog 1 (497 aa).

Positions 306-497 are disordered; sequence EASEPTEAEA…PPNFDDEEWD (192 aa). Residues 323 to 339 show a composition bias toward pro residues; that stretch reads LPPPPPPMKLDPSPQPA. Positions 341–350 are enriched in low complexity; that stretch reads TPVEITEIPP. Pro residues predominate over residues 351–372; it reads IISPPAPPPPPPPPPPPPPPQT. The WH2 domain maps to 390–412; that stretch reads GRSDLMAAIRAAGGAGNAKLSRI.

Belongs to the WASH1 family. As to quaternary structure, component of the WASH core complex. Component of the DHIC (ddl-1-containing hsf-1 inhibitory) complex, which contains at least ddl-1, ddl-2, hsb-1 and hsf-1. Within the complex, interacts with ddl-1. Formation of the DHIC may be dependent upon the Insulin/IGF-1-like signaling (IIS) mediated pathway. Expressed in several neurons located throughout the body.

Acts as a component of the WASH core complex that functions as a nucleation-promoting factor (NPF) at the surface of endosomes, where it recruits and activates the Arp2/3 complex to induce actin polymerization, playing a key role in the fission of tubules that serve as transport intermediates during endosome sorting. Acts as a component of the DHIC (ddl-1-containing hsf-1 inhibitory complex) which modulates lifespan by sequestering the heat shock transcription factor hsf-1 to negatively regulate its binding to DNA and its transcriptional activity. In Caenorhabditis elegans, this protein is WASH complex subunit homolog 1.